A 360-amino-acid polypeptide reads, in one-letter code: Complement control protein homolog (360 aa).

The signal sequence occupies residues 1 to 20 (MYTLHYICLVLSCVIYFVWT). 4 consecutive Sushi domains span residues 21–81 (LSCP…KCQK), 82–144 (KKCS…ICDI), 145–207 (KKCK…KCEF), and 208–266 (IFCK…ECMK). 8 cysteine pairs are disulfide-bonded: C23-C68, C54-C79, C84-C125, C111-C142, C147-C191, C175-C205, C210-C252, and C238-C264. Residues N36, N39, N46, and N72 are each glycosylated (N-linked (GlcNAc...) asparagine; by host). N-linked (GlcNAc...) asparagine; by host glycosylation occurs at N155. The N-linked (GlcNAc...) asparagine; by host glycan is linked to N294. Residues 328 to 350 (GVLVIILTTSFIIIGIILTGVCL) form a helical membrane-spanning segment.

This sequence belongs to the receptors of complement activation (RCA) family.

The protein localises to the membrane. Its subcellular location is the secreted. The sequence is that of Complement control protein homolog (4) from Saimiriine herpesvirus 2 (strain 11) (SaHV-2).